The primary structure comprises 178 residues: MLDAFSRKAVSADSSGAFIGGGELASLKSFIADGNKRLDAVNALSSNAACIVSDAVAGICCENTGLTAPNGGVYTNRKMAACLRDGEIVLRYVSYALLAGDASVLQDRCLNGLRETYAALGVPTGSAARAVAIMKAASAALITNTNSQPKKAAVTQGDCSSLAGEAGSYFDAVISAIS.

Residues Cys-50 and Cys-61 each coordinate phycourobilin. (2R,3E)-phycoerythrobilin is bound by residues Cys-82 and Cys-159.

The protein belongs to the phycobiliprotein family. As to quaternary structure, heterodimer of an alpha and a beta chain. In terms of processing, contains two covalently linked phycoerythrobilin chromophores and one covalently linked phycourobilin chromophore.

The protein localises to the cellular thylakoid membrane. Functionally, light-harvesting photosynthetic bile pigment-protein from the phycobiliprotein complex. The protein is C-phycoerythrin class 2 subunit beta (mpeB) of Synechococcus sp. (strain WH8020).